The primary structure comprises 164 residues: V-type proton ATPase 16 kDa proteolipid subunit (164 aa).

Over 1-10 (MSDLCPPTAP) the chain is Lumenal. A helical transmembrane segment spans residues 11 to 31 (FFGFMGAAVALIFANLGAAYG). At 32-53 (TAKSGVGVSSMGVMKPDLVMKS) the chain is on the cytoplasmic side. Residues 54–74 (IIPVVMAGVLGIYGLIIAVII) form a helical membrane-spanning segment. The Lumenal portion of the chain corresponds to 75–96 (GNGVKGPEGGKPQYSSFTGFAH). A helical membrane pass occupies residues 97-118 (LAAGLACGLSGMAAGIAIGIVG). At 119–130 (DAGVRASAQQAK) the chain is on the cytoplasmic side. Residues 131-155 (LYVGMVLILIFAEALGLYGLIVGLI) form a helical membrane-spanning segment. Topologically, residues 156–164 (LTSKEAPCS) are lumenal.

It belongs to the V-ATPase proteolipid subunit family. V-ATPase is a heteromultimeric enzyme composed of a peripheral catalytic V1 complex (main components: subunits A, B, C, D, E, and F) attached to an integral membrane V0 proton pore complex (main component: the proteolipid protein; which is present as a hexamer that forms the proton-conducting pore).

It is found in the vacuole membrane. Proton-conducting pore forming subunit of the membrane integral V0 complex of vacuolar ATPase. V-ATPase is responsible for acidifying a variety of intracellular compartments in eukaryotic cells. In Chrysotila carterae (Marine alga), this protein is V-type proton ATPase 16 kDa proteolipid subunit (VAP).